The following is a 271-amino-acid chain: 3-methyl-2-oxobutanoate hydroxymethyltransferase (271 aa).

Residues Asp-53 and Asp-92 each coordinate Mg(2+). Residues 53 to 54 (DS), Asp-92, and Lys-120 contribute to the 3-methyl-2-oxobutanoate site. Glu-122 is a Mg(2+) binding site. Glu-189 functions as the Proton acceptor in the catalytic mechanism.

It belongs to the PanB family. Homodecamer; pentamer of dimers. Mg(2+) is required as a cofactor.

It is found in the cytoplasm. The catalysed reaction is 3-methyl-2-oxobutanoate + (6R)-5,10-methylene-5,6,7,8-tetrahydrofolate + H2O = 2-dehydropantoate + (6S)-5,6,7,8-tetrahydrofolate. It participates in cofactor biosynthesis; (R)-pantothenate biosynthesis; (R)-pantoate from 3-methyl-2-oxobutanoate: step 1/2. Functionally, catalyzes the reversible reaction in which hydroxymethyl group from 5,10-methylenetetrahydrofolate is transferred onto alpha-ketoisovalerate to form ketopantoate. The protein is 3-methyl-2-oxobutanoate hydroxymethyltransferase of Burkholderia multivorans (strain ATCC 17616 / 249).